Here is a 459-residue protein sequence, read N- to C-terminus: Sorting nexin-8 (459 aa).

Residues 1 to 53 (MTGGAMDPLPTAPGAAAAEAEVDEEADPPAADSPVPPVSEPRAPDAGQMQVPP) are disordered. In terms of domain architecture, PX spans 68–176 (ARDAVQVELV…KLFLSFSGPD (109 aa)). Arg104, Lys130, and Arg143 together coordinate a 1,2-diacyl-sn-glycero-3-phospho-(1D-myo-inositol-3-phosphate).

It belongs to the sorting nexin family.

It localises to the early endosome membrane. Functionally, may be involved in several stages of intracellular trafficking. May play a role in intracellular protein transport from early endosomes to the trans-Golgi network. The sequence is that of Sorting nexin-8 (SNX8) from Bos taurus (Bovine).